The primary structure comprises 250 residues: Putative ABC transporter ATP-binding protein YjkB (250 aa).

Residues 13-245 (ISFRSVRKSY…PQHEAAKEFL (233 aa)) form the ABC transporter domain. 49–56 (GPSGSGKS) is an ATP binding site.

It belongs to the ABC transporter superfamily.

In Bacillus subtilis (strain 168), this protein is Putative ABC transporter ATP-binding protein YjkB (yjkB).